The primary structure comprises 376 residues: Methylthioribose-1-phosphate isomerase (376 aa).

Asp256 (proton donor) is an active-site residue.

The protein belongs to the eIF-2B alpha/beta/delta subunits family. MtnA subfamily.

The protein resides in the cytoplasm. The protein localises to the nucleus. It carries out the reaction 5-(methylsulfanyl)-alpha-D-ribose 1-phosphate = 5-(methylsulfanyl)-D-ribulose 1-phosphate. It participates in amino-acid biosynthesis; L-methionine biosynthesis via salvage pathway; L-methionine from S-methyl-5-thio-alpha-D-ribose 1-phosphate: step 1/6. Its function is as follows. Catalyzes the interconversion of methylthioribose-1-phosphate (MTR-1-P) into methylthioribulose-1-phosphate (MTRu-1-P). This Vitis vinifera (Grape) protein is Methylthioribose-1-phosphate isomerase.